Consider the following 337-residue polypeptide: Replication-associated protein (337 aa).

A CRESS-DNA virus Rep endonuclease domain is found at 12–114 (RLQTKYVFLT…DGNVITKGEF (103 aa)). An RCR-1 motif is present at residues 19–22 (FLTY). Residues glutamate 53, histidine 61, and histidine 63 each contribute to the a divalent metal cation site. The RCR-2 signature appears at 61-63 (HLH). Tyrosine 101 acts as the For DNA cleavage activity in catalysis. Residues 101–104 (YISK) carry the RCR-3 motif. Aspartate 105 is an a divalent metal cation binding site. The interval 163–175 (SANKLFPPQPEIY) is oligomerization. An ATP-binding site is contributed by 216-223 (GPSRTGKT). Positions 239-257 (IDFTVYDDHATYNVIDDIP) are transactivation. The Nuclear localization signal motif lies at 279–289 (KYGKKKKIKGG).

It belongs to the geminiviridae Rep protein family. In terms of assembly, homooligomer. Rep binds to repeated DNA motifs (iterons). Forms the O-complex, which is a Rep-DNA complex involved in the initiation of RCR. Part of the C- and V-complexes which are RepA-Rep-DNA complexes involved in the c-sense and v-sense transcription. Mg(2+) is required as a cofactor. The cofactor is Mn(2+).

Its subcellular location is the host nucleus. Functionally, essential for the replication of viral ssDNA. The closed circular ssDNA genome is first converted to a superhelical dsDNA. Rep binds a specific region at the genome origin of replication. It introduces an endonucleolytic nick within the conserved sequence 5'-TAATATTAC-3' in the intergenic region of the genome present in all geminiviruses, thereby initiating the rolling circle replication (RCR). Following cleavage, binds covalently to the 5'-phosphate of DNA as a tyrosyl ester. The cleavage gives rise to a free 3'-OH that serves as a primer for the cellular DNA polymerase. The polymerase synthesizes the (+) strand DNA by rolling circle mechanism. After one round of replication, a Rep-catalyzed nucleotidyl transfer reaction releases a circular single-stranded virus genome, thereby terminating the replication. Displays origin-specific DNA cleavage, nucleotidyl transferase, ATPase and helicase activities. Acts as an inhibitor of C-sense gene transcription. In Tobacco yellow dwarf virus (strain Australia) (TYDV), this protein is Replication-associated protein.